The chain runs to 451 residues: UDP-N-acetylmuramoylalanine--D-glutamate ligase (451 aa).

ATP is bound at residue 120-126; that stretch reads GSNGKTT.

Belongs to the MurCDEF family.

It localises to the cytoplasm. It carries out the reaction UDP-N-acetyl-alpha-D-muramoyl-L-alanine + D-glutamate + ATP = UDP-N-acetyl-alpha-D-muramoyl-L-alanyl-D-glutamate + ADP + phosphate + H(+). It participates in cell wall biogenesis; peptidoglycan biosynthesis. In terms of biological role, cell wall formation. Catalyzes the addition of glutamate to the nucleotide precursor UDP-N-acetylmuramoyl-L-alanine (UMA). The chain is UDP-N-acetylmuramoylalanine--D-glutamate ligase from Bacillus pumilus (strain SAFR-032).